The sequence spans 483 residues: CdaA regulatory protein CdaR (483 aa).

Residues 9-26 (WAVKIIALLFALLLYVAV) form a helical membrane-spanning segment. YbbR-like domains follow at residues 55–135 (IPVK…TVTI), 143–228 (FPVE…KITV), 237–316 (VPFK…TLHI), and 329–394 (VPIK…VNGP). The disordered stretch occupies residues 410-483 (LTSKKSNTST…STANSQSSSE (74 aa)). The span at 413–430 (KKSNTSTNDNSSNTSGNQ) shows a compositional bias: low complexity. Residues 431–454 (DTDKQTNDQKNNQQEDTKNTDKNN) show a composition bias toward basic and acidic residues.

Interacts with CdaA.

It localises to the cell membrane. Functionally, upon coexpression in E.coli stimulates the diadenylate cyclase activity of CdaA about 20-fold. In B.subtilis c-di-AMP is a second messenger that mediates growth, DNA repair and cell wall homeostasis; it is toxic when present in excess. The sequence is that of CdaA regulatory protein CdaR from Bacillus subtilis (strain 168).